The primary structure comprises 372 residues: Heat shock 70 kDa protein II (372 aa).

It belongs to the heat shock protein 70 family.

The polypeptide is Heat shock 70 kDa protein II (HSP70II) (Paracentrotus lividus (Common sea urchin)).